Reading from the N-terminus, the 446-residue chain is Phosphoglucosamine mutase (446 aa).

The Phosphoserine intermediate role is filled by S101. Residues S101, D240, D242, and D244 each contribute to the Mg(2+) site. The residue at position 101 (S101) is a Phosphoserine.

It belongs to the phosphohexose mutase family. The cofactor is Mg(2+). Activated by phosphorylation.

The catalysed reaction is alpha-D-glucosamine 1-phosphate = D-glucosamine 6-phosphate. Catalyzes the conversion of glucosamine-6-phosphate to glucosamine-1-phosphate. The chain is Phosphoglucosamine mutase from Coxiella burnetii (strain RSA 331 / Henzerling II).